The primary structure comprises 406 residues: Cysteine desulfurase (406 aa).

N6-(pyridoxal phosphate)lysine is present on Lys-226. Residue Cys-364 is the Cysteine persulfide intermediate of the active site.

Belongs to the class-V pyridoxal-phosphate-dependent aminotransferase family. Csd subfamily. In terms of assembly, homodimer. Interacts with SufE and the SufBCD complex composed of SufB, SufC and SufD. The interaction with SufE is required to mediate the direct transfer of the sulfur atom from the S-sulfanylcysteine. Pyridoxal 5'-phosphate serves as cofactor.

It is found in the cytoplasm. It catalyses the reaction (sulfur carrier)-H + L-cysteine = (sulfur carrier)-SH + L-alanine. The catalysed reaction is L-selenocysteine + AH2 = hydrogenselenide + L-alanine + A + H(+). It participates in cofactor biosynthesis; iron-sulfur cluster biosynthesis. In terms of biological role, cysteine desulfurases mobilize the sulfur from L-cysteine to yield L-alanine, an essential step in sulfur metabolism for biosynthesis of a variety of sulfur-containing biomolecules. Component of the suf operon, which is activated and required under specific conditions such as oxidative stress and iron limitation. Acts as a potent selenocysteine lyase in vitro, that mobilizes selenium from L-selenocysteine. Selenocysteine lyase activity is however unsure in vivo. The protein is Cysteine desulfurase of Yersinia pseudotuberculosis serotype O:1b (strain IP 31758).